Consider the following 257-residue polypeptide: DNA repair protein RecO (257 aa).

This sequence belongs to the RecO family.

Involved in DNA repair and RecF pathway recombination. The chain is DNA repair protein RecO from Synechococcus sp. (strain CC9605).